Here is a 792-residue protein sequence, read N- to C-terminus: DEAD-box ATP-dependent RNA helicase 40 (792 aa).

Positions 1–16 (MSAGTAPAAPRYAPDD) are enriched in low complexity. Disordered regions lie at residues 1 to 25 (MSAGTAPAAPRYAPDDPSLPKPWRG) and 44 to 118 (TQYE…PLPA). A WW domain is found at 17–51 (PSLPKPWRGLVDGTTGYLYYWNPETNITQYEKPLP). Residues 52–68 (PEDQLPPPPPLPPPPPR) show a composition bias toward pro residues. Composition is skewed to basic and acidic residues over residues 70-80 (GRGDRDRDRRD) and 88-108 (PRRDHRDRDRDRDRRHDDHRS). A Q motif motif is present at residues 150–178 (TSFETGGFPPEILKEIQRAGFSSPTPIQA). Residues 181–355 (WPIALQCQDV…EDLLVHPVQV (175 aa)) form the Helicase ATP-binding domain. 194–201 (AKTGSGKT) lines the ATP pocket. The short motif at 303–306 (DEAD) is the DEAD box element. The Helicase C-terminal domain maps to 384-528 (RLEQILRSQD…RVPRDLADMA (145 aa)). The disordered stretch occupies residues 523–792 (DLADMASRGG…NATVQNGGDN (270 aa)). Composition is skewed to basic and acidic residues over residues 543–560 (TRSDRGGSHSELDSRYGG) and 572–588 (DSSRSSRRHDYGDDGRS). 2 stretches are compositionally biased toward basic residues: residues 589-599 (RRSGRGRSRSR) and 609-654 (RSPK…RRHE). Positions 668-708 (GHGERKRTPEADPSRNHTNHSDPKDDRHPEDGKVGKVDLDR) are enriched in basic and acidic residues. Polar residues predominate over residues 725–739 (GKTSRSVSPGNQVEG). A compositionally biased stretch (acidic residues) spans 764 to 777 (DEEEGMIDEDGEIA).

It belongs to the DEAD box helicase family. DDX5/DBP2 subfamily.

It localises to the nucleus. It catalyses the reaction ATP + H2O = ADP + phosphate + H(+). Functionally, ATP-dependent RNA helicase involved nonsense-mediated mRNA decay and ribosome biogenesis through rRNA processing. This Oryza sativa subsp. japonica (Rice) protein is DEAD-box ATP-dependent RNA helicase 40.